The primary structure comprises 106 residues: Urease subunit beta (106 aa).

Belongs to the urease beta subunit family. In terms of assembly, heterotrimer of UreA (gamma), UreB (beta) and UreC (alpha) subunits. Three heterotrimers associate to form the active enzyme.

Its subcellular location is the cytoplasm. The catalysed reaction is urea + 2 H2O + H(+) = hydrogencarbonate + 2 NH4(+). It participates in nitrogen metabolism; urea degradation; CO(2) and NH(3) from urea (urease route): step 1/1. This chain is Urease subunit beta, found in Prochlorococcus marinus (strain MIT 9312).